An 83-amino-acid chain; its full sequence is Alpha-neurotoxin NTX-2 (83 aa).

The N-terminal stretch at 1-21 (MKTLLLTLLVVTIVCLDLGYT) is a signal peptide. 4 disulfides stabilise this stretch: cysteine 24–cysteine 45, cysteine 38–cysteine 62, cysteine 64–cysteine 75, and cysteine 76–cysteine 81.

The protein belongs to the three-finger toxin family. Short-chain subfamily. Type I alpha-neurotoxin sub-subfamily. As to expression, expressed by the venom gland.

The protein localises to the secreted. Its function is as follows. Binds to muscle nicotinic acetylcholine receptor (nAChR) and inhibit acetylcholine from binding to the receptor, thereby impairing neuromuscular transmission. This Naja sputatrix (Malayan spitting cobra) protein is Alpha-neurotoxin NTX-2.